We begin with the raw amino-acid sequence, 260 residues long: CD40 ligand (260 aa).

The Cytoplasmic segment spans residues 1-22; that stretch reads MIETYSQPSPRSVATGLPASMK. A helical; Signal-anchor for type II membrane protein membrane pass occupies residues 23–46; that stretch reads IFMYLLTVFLITQMIGSVLFAVYL. Residues 47–260 are Extracellular-facing; that stretch reads HRRLDKVEEE…GFSSFGLLKL (214 aa). The THD domain maps to 121 to 260; that stretch reads IAAHVVSEAN…GFSSFGLLKL (140 aa). A disulfide bridge links C177 with C217. N239 carries an N-linked (GlcNAc...) asparagine glycan.

The protein belongs to the tumor necrosis factor family. As to quaternary structure, homotrimer. Interacts with CD28. CD40 ligand, soluble form: Exists as either a monomer or a homotrimer. Forms a ternary complex between CD40 and integrins for CD40-CD40LG signaling. Post-translationally, the soluble form derives from the membrane form by proteolytic processing. In terms of tissue distribution, specifically expressed on activated CD4+ T-lymphocytes.

It localises to the cell membrane. The protein localises to the cell surface. It is found in the secreted. Its function is as follows. Cytokine that acts as a ligand to CD40/TNFRSF5. Costimulates T-cell proliferation and cytokine production. Its cross-linking on T-cells generates a costimulatory signal which enhances the production of IL4 and IL10 in conjunction with the TCR/CD3 ligation and CD28 costimulation. Induces the activation of NF-kappa-B. Induces the activation of kinases MAPK8 and PAK2 in T-cells. Mediates B-cell proliferation in the absence of co-stimulus as well as IgE production in the presence of IL4. Involved in immunoglobulin class switching. In terms of biological role, acts as a ligand for integrins, specifically ITGA5:ITGB1 and ITGAV:ITGB3; both integrins and the CD40 receptor are required for activation of CD40-CD40LG signaling, which have cell-type dependent effects, such as B-cell activation, NF-kappa-B signaling and anti-apoptotic signaling. The sequence is that of CD40 ligand (Cd40lg) from Mus musculus (Mouse).